A 414-amino-acid chain; its full sequence is Acetate kinase (414 aa).

Residue N7 coordinates Mg(2+). K14 is a binding site for ATP. Residue R99 coordinates substrate. D157 (proton donor/acceptor) is an active-site residue. ATP contacts are provided by residues 217 to 221 and 341 to 345; these read HLGNG and GIGEN. Position 395 (E395) interacts with Mg(2+).

It belongs to the acetokinase family. Homodimer. It depends on Mg(2+) as a cofactor. Requires Mn(2+) as cofactor.

The protein resides in the cytoplasm. It catalyses the reaction acetate + ATP = acetyl phosphate + ADP. The protein operates within metabolic intermediate biosynthesis; acetyl-CoA biosynthesis; acetyl-CoA from acetate: step 1/2. Functionally, catalyzes the formation of acetyl phosphate from acetate and ATP. Can also catalyze the reverse reaction. This Solibacter usitatus (strain Ellin6076) protein is Acetate kinase.